The following is a 273-amino-acid chain: 4-hydroxy-tetrahydrodipicolinate reductase (273 aa).

Residue glycine 12–methionine 17 coordinates NAD(+). Arginine 39 contacts NADP(+). NAD(+)-binding positions include glycine 102–threonine 104 and alanine 126–phenylalanine 129. Histidine 159 acts as the Proton donor/acceptor in catalysis. Histidine 160 contacts (S)-2,3,4,5-tetrahydrodipicolinate. The active-site Proton donor is the lysine 163. Residue glycine 169–threonine 170 participates in (S)-2,3,4,5-tetrahydrodipicolinate binding.

Belongs to the DapB family. Homotetramer.

It localises to the cytoplasm. It catalyses the reaction (S)-2,3,4,5-tetrahydrodipicolinate + NAD(+) + H2O = (2S,4S)-4-hydroxy-2,3,4,5-tetrahydrodipicolinate + NADH + H(+). It carries out the reaction (S)-2,3,4,5-tetrahydrodipicolinate + NADP(+) + H2O = (2S,4S)-4-hydroxy-2,3,4,5-tetrahydrodipicolinate + NADPH + H(+). The protein operates within amino-acid biosynthesis; L-lysine biosynthesis via DAP pathway; (S)-tetrahydrodipicolinate from L-aspartate: step 4/4. Functionally, catalyzes the conversion of 4-hydroxy-tetrahydrodipicolinate (HTPA) to tetrahydrodipicolinate. The chain is 4-hydroxy-tetrahydrodipicolinate reductase from Sodalis glossinidius (strain morsitans).